The sequence spans 319 residues: Insulin gene enhancer protein ISL-2 (319 aa).

LIM zinc-binding domains lie at 1–43 (FLLR…CKRD) and 52–106 (CAQC…RADH). Disordered stretches follow at residues 106 to 151 (HGPP…EKTT), 218 to 237 (QQHS…LVAG), and 286 to 319 (ESGS…PAET). A DNA-binding region (homeobox) is located at residues 150-209 (TTRVRTVLNEKQLHTLRTCYAANPRPDALMKEQLVEMTGLSPRVIRVWFQNKRCKDKKKS). Residues 218–230 (QQHSDKTSLQGLT) are compositionally biased toward polar residues. Positions 286-303 (ESGSLGTSSGSDVTSLSS) are enriched in low complexity. Polar residues predominate over residues 304-319 (QLPDTPNSMVPSPAET).

It localises to the nucleus. Functionally, transcriptional factor that defines subclasses of motoneurons that segregate into columns in the spinal cord and select distinct axon pathways. Acts in conjunction with LIM-1, LIM-3 and ISL-1. This Gallus gallus (Chicken) protein is Insulin gene enhancer protein ISL-2 (ISL2).